The chain runs to 179 residues: Orotate phosphoribosyltransferase (179 aa).

5-phospho-alpha-D-ribose 1-diphosphate-binding positions include Arg-94, Lys-95, Lys-98, His-100, and 120 to 128; that span reads EDTSTTGNS. Residues Thr-124 and Arg-152 each coordinate orotate.

This sequence belongs to the purine/pyrimidine phosphoribosyltransferase family. PyrE subfamily. Homodimer. The cofactor is Mg(2+).

It carries out the reaction orotidine 5'-phosphate + diphosphate = orotate + 5-phospho-alpha-D-ribose 1-diphosphate. The protein operates within pyrimidine metabolism; UMP biosynthesis via de novo pathway; UMP from orotate: step 1/2. Functionally, catalyzes the transfer of a ribosyl phosphate group from 5-phosphoribose 1-diphosphate to orotate, leading to the formation of orotidine monophosphate (OMP). The polypeptide is Orotate phosphoribosyltransferase (Mycobacterium bovis (strain ATCC BAA-935 / AF2122/97)).